The chain runs to 211 residues: Large ribosomal subunit protein uL4 (211 aa).

Residues 41–53 (QAHSRQGTASTLT) show a composition bias toward polar residues. The tract at residues 41 to 85 (QAHSRQGTASTLTRAEVRGGGRKPYKQKGTGRARQGSIRTPLRPG) is disordered. A compositionally biased stretch (basic residues) spans 60 to 71 (GGRKPYKQKGTG).

The protein belongs to the universal ribosomal protein uL4 family. Part of the 50S ribosomal subunit.

In terms of biological role, one of the primary rRNA binding proteins, this protein initially binds near the 5'-end of the 23S rRNA. It is important during the early stages of 50S assembly. It makes multiple contacts with different domains of the 23S rRNA in the assembled 50S subunit and ribosome. Its function is as follows. Forms part of the polypeptide exit tunnel. The chain is Large ribosomal subunit protein uL4 from Prochlorococcus marinus (strain SARG / CCMP1375 / SS120).